Reading from the N-terminus, the 77-residue chain is U8-lycotoxin-Ls1o (77 aa).

An N-terminal signal peptide occupies residues 1–20 (MKLMIFTGLVLFAIVSLIEA). Residues 21-26 (QAENGK) constitute a propeptide that is removed on maturation.

The protein belongs to the neurotoxin 19 (CSTX) family. 08 (U8-Lctx) subfamily. In terms of processing, contains 4 disulfide bonds. As to expression, expressed by the venom gland.

It is found in the secreted. This chain is U8-lycotoxin-Ls1o, found in Lycosa singoriensis (Wolf spider).